The sequence spans 388 residues: Protein FAM199X (388 aa).

Positions 288–312 (SMVSSASSSGSSVGNSASNSSANMS) are enriched in low complexity. The disordered stretch occupies residues 288-358 (SMVSSASSSG…QLKEQRQARK (71 aa)). Phosphoserine occurs at positions 316 and 321. The span at 330 to 349 (DSKKRSKQRKLQQKAFRKRQ) shows a compositional bias: basic residues.

Belongs to the FAM199 family.

In Mus musculus (Mouse), this protein is Protein FAM199X (Fam199x).